The primary structure comprises 803 residues: Subtilisin-like protease SBT5.5 (803 aa).

The first 22 residues, Met1 to Ala22, serve as a signal peptide directing secretion. A propeptide spans Ser23–His112 (activation peptide). In terms of domain architecture, Inhibitor I9 spans Val30–Lys108. One can recognise a Peptidase S8 domain in the interval Lys140–Ala656. The active-site Charge relay system is Asp169. N-linked (GlcNAc...) asparagine glycosylation is present at Asn202. His244 acts as the Charge relay system in catalysis. In terms of domain architecture, PA spans Tyr409–Leu504. Catalysis depends on Ser589, which acts as the Charge relay system. Asn725 carries an N-linked (GlcNAc...) asparagine glycan.

Belongs to the peptidase S8 family.

Its subcellular location is the secreted. This Arabidopsis thaliana (Mouse-ear cress) protein is Subtilisin-like protease SBT5.5.